A 341-amino-acid polypeptide reads, in one-letter code: Tetraacyldisaccharide 4'-kinase (341 aa).

ATP is bound at residue 65 to 72 (TVGGSGKT).

The protein belongs to the LpxK family.

The catalysed reaction is a lipid A disaccharide + ATP = a lipid IVA + ADP + H(+). Its pathway is glycolipid biosynthesis; lipid IV(A) biosynthesis; lipid IV(A) from (3R)-3-hydroxytetradecanoyl-[acyl-carrier-protein] and UDP-N-acetyl-alpha-D-glucosamine: step 6/6. Functionally, transfers the gamma-phosphate of ATP to the 4'-position of a tetraacyldisaccharide 1-phosphate intermediate (termed DS-1-P) to form tetraacyldisaccharide 1,4'-bis-phosphate (lipid IVA). This chain is Tetraacyldisaccharide 4'-kinase, found in Shewanella woodyi (strain ATCC 51908 / MS32).